The sequence spans 246 residues: Sulfate transporter CysZ (246 aa).

The next 4 membrane-spanning stretches (helical) occupy residues Leu24–Ala44, Ile69–Val89, Leu148–Phe168, and Leu214–Phe234.

Belongs to the CysZ family.

The protein resides in the cell inner membrane. Its function is as follows. High affinity, high specificity proton-dependent sulfate transporter, which mediates sulfate uptake. Provides the sulfur source for the cysteine synthesis pathway. The chain is Sulfate transporter CysZ from Pseudomonas paraeruginosa (strain DSM 24068 / PA7) (Pseudomonas aeruginosa (strain PA7)).